Reading from the N-terminus, the 219-residue chain is Ribosome maturation factor RimP (219 aa).

The tract at residues 195–219 is disordered; sequence EGRIPGDDLGAEPEDAASTETQEKK.

Belongs to the RimP family.

The protein localises to the cytoplasm. Required for maturation of 30S ribosomal subunits. This is Ribosome maturation factor RimP from Brucella melitensis biotype 2 (strain ATCC 23457).